A 410-amino-acid polypeptide reads, in one-letter code: Tryptophan synthase beta chain (410 aa).

An N6-(pyridoxal phosphate)lysine modification is found at Lys99.

Belongs to the TrpB family. As to quaternary structure, tetramer of two alpha and two beta chains. Pyridoxal 5'-phosphate serves as cofactor.

The catalysed reaction is (1S,2R)-1-C-(indol-3-yl)glycerol 3-phosphate + L-serine = D-glyceraldehyde 3-phosphate + L-tryptophan + H2O. It participates in amino-acid biosynthesis; L-tryptophan biosynthesis; L-tryptophan from chorismate: step 5/5. Its function is as follows. The beta subunit is responsible for the synthesis of L-tryptophan from indole and L-serine. In Pseudomonas fluorescens (strain Pf0-1), this protein is Tryptophan synthase beta chain.